Consider the following 262-residue polypeptide: Ribosomal RNA small subunit methyltransferase A (262 aa).

S-adenosyl-L-methionine-binding residues include histidine 13, leucine 15, glycine 40, glutamate 61, aspartate 85, and asparagine 103.

It belongs to the class I-like SAM-binding methyltransferase superfamily. rRNA adenine N(6)-methyltransferase family. RsmA subfamily.

It localises to the cytoplasm. The catalysed reaction is adenosine(1518)/adenosine(1519) in 16S rRNA + 4 S-adenosyl-L-methionine = N(6)-dimethyladenosine(1518)/N(6)-dimethyladenosine(1519) in 16S rRNA + 4 S-adenosyl-L-homocysteine + 4 H(+). Specifically dimethylates two adjacent adenosines (A1518 and A1519) in the loop of a conserved hairpin near the 3'-end of 16S rRNA in the 30S particle. May play a critical role in biogenesis of 30S subunits. The sequence is that of Ribosomal RNA small subunit methyltransferase A from Bordetella petrii (strain ATCC BAA-461 / DSM 12804 / CCUG 43448).